Consider the following 295-residue polypeptide: Probable intramembrane protease C25B8.17 (295 aa).

A helical membrane pass occupies residues Met1–Ser21. At Ala22–Lys35 the chain is on the cytoplasmic side. A helical transmembrane segment spans residues Arg36–Leu56. Residues Arg57 to Tyr63 are Lumenal-facing. The chain crosses the membrane as a helical span at residues Ile64–Phe84. Topologically, residues Asn85 to Thr89 are cytoplasmic. Residues Phe90–Tyr106 form a helical membrane-spanning segment. At Phe107–His111 the chain is on the lumenal side. A helical membrane pass occupies residues Trp112–Met130. Residues Arg131–Ala139 are Cytoplasmic-facing. The chain crosses the membrane as a helical span at residues Leu140 to Val160. Asp149 is a catalytic residue. Residues Thr161 to Leu183 lie on the Lumenal side of the membrane. The chain crosses the membrane as a helical span at residues Ser184–Phe204. The active site involves Asp190. The Cytoplasmic portion of the chain corresponds to Asp205 to Thr221. The chain crosses the membrane as a helical span at residues Tyr222–Phe244. Residues Lys245–Pro249 lie on the Lumenal side of the membrane. The PAL signature appears at Pro249–Leu251. Residues Ala250–Tyr268 form a helical membrane-spanning segment. Over Arg269 to Thr295 the chain is Cytoplasmic.

This sequence belongs to the peptidase A22B family.

Its subcellular location is the endoplasmic reticulum membrane. The protein resides in the golgi apparatus membrane. This Schizosaccharomyces pombe (strain 972 / ATCC 24843) (Fission yeast) protein is Probable intramembrane protease C25B8.17.